A 347-amino-acid polypeptide reads, in one-letter code: Anthranilate phosphoribosyltransferase (347 aa).

Residues Gly82, 85-86 (GD), Thr90, 92-95 (NIST), 110-118 (KHGNRAITS), and Thr122 contribute to the 5-phospho-alpha-D-ribose 1-diphosphate site. Residue Gly82 coordinates anthranilate. Ser94 is a binding site for Mg(2+). Asn113 lines the anthranilate pocket. Position 168 (Arg168) interacts with anthranilate. 2 residues coordinate Mg(2+): Asp226 and Glu227.

The protein belongs to the anthranilate phosphoribosyltransferase family. As to quaternary structure, homodimer. The cofactor is Mg(2+).

The catalysed reaction is N-(5-phospho-beta-D-ribosyl)anthranilate + diphosphate = 5-phospho-alpha-D-ribose 1-diphosphate + anthranilate. It functions in the pathway amino-acid biosynthesis; L-tryptophan biosynthesis; L-tryptophan from chorismate: step 2/5. Functionally, catalyzes the transfer of the phosphoribosyl group of 5-phosphorylribose-1-pyrophosphate (PRPP) to anthranilate to yield N-(5'-phosphoribosyl)-anthranilate (PRA). This chain is Anthranilate phosphoribosyltransferase, found in Caulobacter sp. (strain K31).